The primary structure comprises 1077 residues: Zinc finger protein 518B (1077 aa).

Over residues 9–30 the composition is skewed to polar residues; it reads YTTQVNGGPSSLTMSPKQPNRA. Residues 9-35 are disordered; sequence YTTQVNGGPSSLTMSPKQPNRATRTER. 2 consecutive C2H2-type zinc fingers follow at residues 160–182 and 188–211; these read FICS…LVKH and YRCE…RRVH. Positions 372 to 397 are disordered; sequence TSRGDGGTSECLSTEKGSGGQKKMLS. Residue K479 forms a Glycyl lysine isopeptide (Lys-Gly) (interchain with G-Cter in SUMO2) linkage. Disordered regions lie at residues 561 to 585, 599 to 622, 675 to 739, and 825 to 852; these read LVSS…GQVS, GEDK…ETAG, KPSS…GSRQ, and QPLT…RKED. Basic and acidic residues predominate over residues 564-574; it reads SDRKLEDKQME. Polar residues-rich tracts occupy residues 605-621 and 675-688; these read SQQP…SETA and KPSS…QRRS. Glycyl lysine isopeptide (Lys-Gly) (interchain with G-Cter in SUMO2) cross-links involve residues K847 and K861. The segment at 895 to 914 is disordered; that stretch reads QVNSTKKKNKMQANPGRYFK. The segment at 1039-1061 adopts a C2H2-type 3 zinc-finger fold; sequence FKCWFCGRLYEDQEEWMSHGQRH.

The protein belongs to the krueppel C2H2-type zinc-finger protein family.

Its subcellular location is the nucleus. Its function is as follows. Through its association with the EHMT1-EHMT2/G9A and PRC2/EED-EZH2 histone methyltransferase complexes may function in gene silencing, regulating repressive post-translational methylation of histone tails at promoters of target genes. This chain is Zinc finger protein 518B (Znf518b), found in Mus musculus (Mouse).